Reading from the N-terminus, the 141-residue chain is Protein X (141 aa).

The segment covering 24-48 has biased composition (low complexity); it reads QSSGPSFPRPAAGSAASSASSPSPS. The segment at 24 to 52 is disordered; sequence QSSGPSFPRPAAGSAASSASSPSPSDESD. Positions 68–113 are mitochondrial targeting sequence; that stretch reads PCCLVFTCAELRTMDSTVNFVSWHANRQLGMPSKDLWTPYIKDQLL.

Belongs to the orthohepadnavirus protein X family. May form homodimer. May interact with host CEBPA, CFLAR, CREB1, DDB1, E4F1, HBXIP, HSPD1/HSP60, NFKBIA, POLR2E and SMAD4. Interacts with host SMC5-SMC6 complex and induces its degradation. Interacts with host TRPC4AP; leading to prevent ubiquitination of TRPC4AP. Interacts with host PLSCR1; this interaction promotes ubiquitination and degradation of HBx and impairs HBx-mediated cell proliferation. Post-translationally, a fraction may be phosphorylated in insect cells and HepG2 cells, a human hepatoblastoma cell line. Phosphorylated in vitro by host protein kinase C or mitogen-activated protein kinase. N-acetylated in insect cells.

Its subcellular location is the host cytoplasm. It localises to the host nucleus. The protein localises to the host mitochondrion. Multifunctional protein that plays a role in silencing host antiviral defenses and promoting viral transcription. Does not seem to be essential for HBV infection. May be directly involved in development of cirrhosis and liver cancer (hepatocellular carcinoma). Most of cytosolic activities involve modulation of cytosolic calcium. The effect on apoptosis is controversial depending on the cell types in which the studies have been conducted. May induce apoptosis by localizing in mitochondria and causing loss of mitochondrial membrane potential. May also modulate apoptosis by binding host CFLAR, a key regulator of the death-inducing signaling complex (DISC). Promotes viral transcription by using the host E3 ubiquitin ligase DDB1 to target the SMC5-SMC6 complex to proteasomal degradation. This host complex would otherwise bind to viral episomal DNA, and prevents its transcription. Moderately stimulates transcription of many different viral and cellular transcription elements. Promoters and enhancers stimulated by HBx contain DNA binding sites for NF-kappa-B, AP-1, AP-2, c-EBP, ATF/CREB, or the calcium-activated factor NF-AT. The protein is Protein X of Woodchuck hepatitis B virus (isolate 7) (WHV).